The primary structure comprises 465 residues: A-type ATP synthase subunit B (465 aa).

This sequence belongs to the ATPase alpha/beta chains family. As to quaternary structure, has multiple subunits with at least A(3), B(3), C, D, E, F, H, I and proteolipid K(x).

It is found in the cell membrane. In terms of biological role, component of the A-type ATP synthase that produces ATP from ADP in the presence of a proton gradient across the membrane. The B chain is a regulatory subunit. The chain is A-type ATP synthase subunit B from Pyrococcus horikoshii (strain ATCC 700860 / DSM 12428 / JCM 9974 / NBRC 100139 / OT-3).